The sequence spans 60 residues: Large ribosomal subunit protein bL33 (60 aa).

It belongs to the bacterial ribosomal protein bL33 family.

This chain is Large ribosomal subunit protein bL33, found in Chlorobium luteolum (strain DSM 273 / BCRC 81028 / 2530) (Pelodictyon luteolum).